The chain runs to 480 residues: tRNA-2-methylthio-N(6)-dimethylallyladenosine synthase (480 aa).

Positions 43 to 161 (KLYCLNTFGC…FPELLYSAMD (119 aa)) constitute an MTTase N-terminal domain. The [4Fe-4S] cluster site is built by cysteine 52, cysteine 88, cysteine 122, cysteine 198, cysteine 202, and cysteine 205. In terms of domain architecture, Radical SAM core spans 184–414 (RKDGVKAWVT…LETQNRISKE (231 aa)). The 64-residue stretch at 417-480 (DTFLGKVVEV…TWSLEGSIVR (64 aa)) folds into the TRAM domain.

The protein belongs to the methylthiotransferase family. MiaB subfamily. Monomer. It depends on [4Fe-4S] cluster as a cofactor.

Its subcellular location is the cytoplasm. It carries out the reaction N(6)-dimethylallyladenosine(37) in tRNA + (sulfur carrier)-SH + AH2 + 2 S-adenosyl-L-methionine = 2-methylsulfanyl-N(6)-dimethylallyladenosine(37) in tRNA + (sulfur carrier)-H + 5'-deoxyadenosine + L-methionine + A + S-adenosyl-L-homocysteine + 2 H(+). Its function is as follows. Catalyzes the methylthiolation of N6-(dimethylallyl)adenosine (i(6)A), leading to the formation of 2-methylthio-N6-(dimethylallyl)adenosine (ms(2)i(6)A) at position 37 in tRNAs that read codons beginning with uridine. The polypeptide is tRNA-2-methylthio-N(6)-dimethylallyladenosine synthase (Acetivibrio thermocellus (strain ATCC 27405 / DSM 1237 / JCM 9322 / NBRC 103400 / NCIMB 10682 / NRRL B-4536 / VPI 7372) (Clostridium thermocellum)).